The chain runs to 69 residues: MIFKVYYQEDAAQMPVRERTKSLYIEGESEADVRLKLAKQNFNIEYVTAVTGAYLEYEQANSDFKVVNI.

It belongs to the RNA polymerase subunit epsilon family. In terms of assembly, RNAP is composed of a core of 2 alpha, a beta and a beta' subunit. The core is associated with a delta subunit, and at least one of epsilon or omega. When a sigma factor is associated with the core the holoenzyme is formed, which can initiate transcription.

It carries out the reaction RNA(n) + a ribonucleoside 5'-triphosphate = RNA(n+1) + diphosphate. Its function is as follows. A non-essential component of RNA polymerase (RNAP). This Shouchella clausii (strain KSM-K16) (Alkalihalobacillus clausii) protein is DNA-directed RNA polymerase subunit epsilon.